Here is a 284-residue protein sequence, read N- to C-terminus: Nucleotide-binding protein Teth39_0666 (284 aa).

ATP is bound at residue 8-15; it reads GLSGAGKT. 58–61 is a GTP binding site; the sequence is DLRG.

It belongs to the RapZ-like family.

Displays ATPase and GTPase activities. This is Nucleotide-binding protein Teth39_0666 from Thermoanaerobacter pseudethanolicus (strain ATCC 33223 / 39E) (Clostridium thermohydrosulfuricum).